The primary structure comprises 308 residues: Glycine--tRNA ligase alpha subunit (308 aa).

Belongs to the class-II aminoacyl-tRNA synthetase family. Tetramer of two alpha and two beta subunits.

The protein localises to the cytoplasm. The catalysed reaction is tRNA(Gly) + glycine + ATP = glycyl-tRNA(Gly) + AMP + diphosphate. The chain is Glycine--tRNA ligase alpha subunit from Streptococcus pyogenes serotype M3 (strain SSI-1).